The chain runs to 308 residues: Ribosomal RNA small subunit methyltransferase A (308 aa).

S-adenosyl-L-methionine is bound by residues Asn35, Val37, Gly62, Glu83, Asp113, and Asn136.

The protein belongs to the class I-like SAM-binding methyltransferase superfamily. rRNA adenine N(6)-methyltransferase family. RsmA subfamily.

It is found in the cytoplasm. It catalyses the reaction adenosine(1518)/adenosine(1519) in 16S rRNA + 4 S-adenosyl-L-methionine = N(6)-dimethyladenosine(1518)/N(6)-dimethyladenosine(1519) in 16S rRNA + 4 S-adenosyl-L-homocysteine + 4 H(+). In terms of biological role, specifically dimethylates two adjacent adenosines (A1518 and A1519) in the loop of a conserved hairpin near the 3'-end of 16S rRNA in the 30S particle. May play a critical role in biogenesis of 30S subunits. The sequence is that of Ribosomal RNA small subunit methyltransferase A from Bifidobacterium longum (strain NCC 2705).